Reading from the N-terminus, the 1091-residue chain is ATP-citrate synthase (1091 aa).

In terms of domain architecture, ATP-grasp spans 4–265 (KAISEQTGKE…LDAKSGASLK (262 aa)). Positions 58, 66, 67, 109, 111, and 118 each coordinate ATP. The residue at position 131 (Tyr131) is a Phosphotyrosine. Residue Asp216 coordinates ATP. Positions 257, 260, and 262 each coordinate Mg(2+). Ser263 bears the Phosphoserine mark. Citrate-binding residues include Gly309, Asn346, Thr348, Tyr364, and Arg379. A compositionally biased stretch (low complexity) spans 442-457 (SGSTSTPAPSRTASFS). A disordered region spans residues 442-478 (SGSTSTPAPSRTASFSESRADEVAPAKKAKPAMPQGK). Thr447 bears the Phosphothreonine mark. At Ser451 the chain carries Phosphoserine. At Ser455 the chain carries Phosphoserine; by PKA and PKB/AKT1 or PKB/AKT2 or BCKDK. Ser459 is subject to Phosphoserine. An N6-acetyllysine; alternate mark is found at Lys530, Lys536, and Lys544. Glycyl lysine isopeptide (Lys-Gly) (interchain with G-Cter in ubiquitin); alternate cross-links involve residues Lys530, Lys536, and Lys544. Residue Thr629 is modified to Phosphothreonine. Ser653 carries the post-translational modification Phosphoserine. Tyr672 is modified (phosphotyrosine). Catalysis depends on His750, which acts as the Tele-phosphohistidine intermediate. 769-779 (LKEAGVFVPRS) provides a ligand contact to CoA. Ser829 bears the Phosphoserine mark. N6-acetyllysine occurs at positions 938, 958, 968, and 1067. Ser1090 is modified (phosphoserine).

In the N-terminal section; belongs to the succinate/malate CoA ligase beta subunit family. It in the C-terminal section; belongs to the succinate/malate CoA ligase alpha subunit family. In terms of assembly, homotetramer. Mg(2+) is required as a cofactor. In terms of processing, phosphorylated by PKA and GSK3 in a sequential manner; phosphorylation results in activation of its activity. Phosphorylation on Thr-447 and Ser-451 depends on the phosphorylation state of Ser-455. Phosphorylation on Ser-455 is decreased by prior phosphorylation on the other 2 residues. Phosphorylated at Ser-455 by BCKDK and dephosphorylated by protein phosphatase PPM1K. Post-translationally, ISGylated. Acetylated at Lys-530, Lys-536 and Lys-544 by KAT2B/PCAF. Acetylation is promoted by glucose and stabilizes the protein, probably by preventing ubiquitination at the same sites. Acetylation promotes de novo lipid synthesis. Deacetylated by SIRT2. In terms of processing, ubiquitinated at Lys-530, Lys-536 and Lys-544 by the BCR(KLHL25) E3 ubiquitin ligase complex and UBR4, leading to its degradation. Ubiquitination is probably inhibited by acetylation at same site. BCR(KLHL25)-mediated degradation of ACLY promotes fatty acid oxidation and is required for differentiation of inducible regulatory T (iTreg) cells.

The protein resides in the cytoplasm. Its subcellular location is the cytosol. The enzyme catalyses oxaloacetate + acetyl-CoA + ADP + phosphate = citrate + ATP + CoA. With respect to regulation, phosphorylation results in activation of its activity. Glucose 6-phosphate, fructose 6-phosphate, fructose 2,6-bisphosphate, ribulose 5-phosphate, and fructose 1,6-bisphosphate also act as activators. Catalyzes the cleavage of citrate into oxaloacetate and acetyl-CoA, the latter serving as common substrate in multiple biochemical reactions in protein, carbohydrate and lipid metabolism. The protein is ATP-citrate synthase (Acly) of Mus musculus (Mouse).